We begin with the raw amino-acid sequence, 304 residues long: Glycine--tRNA ligase alpha subunit (304 aa).

Belongs to the class-II aminoacyl-tRNA synthetase family. Tetramer of two alpha and two beta subunits.

The protein localises to the cytoplasm. The enzyme catalyses tRNA(Gly) + glycine + ATP = glycyl-tRNA(Gly) + AMP + diphosphate. This chain is Glycine--tRNA ligase alpha subunit, found in Vibrio atlanticus (strain LGP32) (Vibrio splendidus (strain Mel32)).